We begin with the raw amino-acid sequence, 351 residues long: uncharacterized protein (351 aa).

Residues Asp-215, Asp-226, His-290, Glu-319, and Glu-333 each contribute to the Mn(2+) site.

The protein belongs to the peptidase M24B family. It depends on Mn(2+) as a cofactor.

This is an uncharacterized protein from Staphylococcus aureus (strain MW2).